A 194-amino-acid polypeptide reads, in one-letter code: Protein GrpE (194 aa).

Positions methionine 1–glutamine 12 are enriched in polar residues. The segment at methionine 1–glutamate 39 is disordered.

It belongs to the GrpE family. As to quaternary structure, homodimer.

It is found in the cytoplasm. Its function is as follows. Participates actively in the response to hyperosmotic and heat shock by preventing the aggregation of stress-denatured proteins, in association with DnaK and GrpE. It is the nucleotide exchange factor for DnaK and may function as a thermosensor. Unfolded proteins bind initially to DnaJ; upon interaction with the DnaJ-bound protein, DnaK hydrolyzes its bound ATP, resulting in the formation of a stable complex. GrpE releases ADP from DnaK; ATP binding to DnaK triggers the release of the substrate protein, thus completing the reaction cycle. Several rounds of ATP-dependent interactions between DnaJ, DnaK and GrpE are required for fully efficient folding. The polypeptide is Protein GrpE (Erwinia tasmaniensis (strain DSM 17950 / CFBP 7177 / CIP 109463 / NCPPB 4357 / Et1/99)).